A 265-amino-acid polypeptide reads, in one-letter code: Protein IL-40 (265 aa).

The signal sequence occupies residues 1 to 20 (MGLPGLFCLAVLAASSFSKA). N-linked (GlcNAc...) asparagine glycosylation is found at Asn86 and Asn132.

As to expression, expressed in fetal liver and bone marrow. Expressed in peripheral blood lymphocyte B cells.

The protein localises to the secreted. Its function is as follows. Probable B cell-associated cytokine that plays a role in the regulation of humoral immune responses. Involved in lymphocyte B cell development and immunoglobulin/IgA production. This is Protein IL-40 from Homo sapiens (Human).